The primary structure comprises 317 residues: 3',5'-bisphosphate nucleotidase (317 aa).

Aspartate 46 serves as the catalytic Proton acceptor. Residues glutamate 69, aspartate 118, isoleucine 120, and aspartate 121 each coordinate Mg(2+). Threonine 123 acts as the Proton acceptor in catalysis. Threonine 123 lines the adenosine 3',5'-bisphosphate pocket. Residues serine 198, histidine 203, serine 227, lysine 230, arginine 244, tyrosine 251, and aspartate 257 each coordinate AMP. The adenosine 3',5'-bisphosphate site is built by histidine 203, serine 227, lysine 230, and arginine 244. Aspartate 257 serves as a coordination point for Mg(2+). An adenosine 3',5'-bisphosphate-binding site is contributed by aspartate 257.

This sequence belongs to the inositol monophosphatase superfamily. In terms of assembly, monomer. Requires Mg(2+) as cofactor.

The protein resides in the cytoplasm. It carries out the reaction adenosine 3',5'-bisphosphate + H2O = AMP + phosphate. The enzyme catalyses 1D-myo-inositol 1,4-bisphosphate + H2O = 1D-myo-inositol 4-phosphate + phosphate. With respect to regulation, inhibited by Li(2+). In terms of biological role, phosphatase that converts 3'-phosphoadenosine 5'-phosphate (PAP) to AMP. Is also able to hydrolyze inositol 1,4-bisphosphate but with less efficiency. The protein is 3',5'-bisphosphate nucleotidase of Entamoeba histolytica (strain ATCC 30459 / HM-1:IMSS / ABRM).